The sequence spans 342 residues: Methionine import ATP-binding protein MetN 2 (342 aa).

The ABC transporter domain maps to 2–241 (ISIEGLSKVF…PKQLVTRKFV (240 aa)). 38–45 (GYSGAGKS) contacts ATP.

It belongs to the ABC transporter superfamily. Methionine importer (TC 3.A.1.24) family. The complex is composed of two ATP-binding proteins (MetN), two transmembrane proteins (MetI) and a solute-binding protein (MetQ).

The protein resides in the cell membrane. The enzyme catalyses L-methionine(out) + ATP + H2O = L-methionine(in) + ADP + phosphate + H(+). It carries out the reaction D-methionine(out) + ATP + H2O = D-methionine(in) + ADP + phosphate + H(+). In terms of biological role, part of the ABC transporter complex MetNIQ involved in methionine import. Responsible for energy coupling to the transport system. This is Methionine import ATP-binding protein MetN 2 from Oceanobacillus iheyensis (strain DSM 14371 / CIP 107618 / JCM 11309 / KCTC 3954 / HTE831).